Here is a 95-residue protein sequence, read N- to C-terminus: Aspartyl/glutamyl-tRNA(Asn/Gln) amidotransferase subunit C (95 aa).

This sequence belongs to the GatC family. In terms of assembly, heterotrimer of A, B and C subunits.

The catalysed reaction is L-glutamyl-tRNA(Gln) + L-glutamine + ATP + H2O = L-glutaminyl-tRNA(Gln) + L-glutamate + ADP + phosphate + H(+). It catalyses the reaction L-aspartyl-tRNA(Asn) + L-glutamine + ATP + H2O = L-asparaginyl-tRNA(Asn) + L-glutamate + ADP + phosphate + 2 H(+). Functionally, allows the formation of correctly charged Asn-tRNA(Asn) or Gln-tRNA(Gln) through the transamidation of misacylated Asp-tRNA(Asn) or Glu-tRNA(Gln) in organisms which lack either or both of asparaginyl-tRNA or glutaminyl-tRNA synthetases. The reaction takes place in the presence of glutamine and ATP through an activated phospho-Asp-tRNA(Asn) or phospho-Glu-tRNA(Gln). This chain is Aspartyl/glutamyl-tRNA(Asn/Gln) amidotransferase subunit C, found in Prosthecochloris aestuarii (strain DSM 271 / SK 413).